The following is a 427-amino-acid chain: Inward rectifier potassium channel 2 (427 aa).

Residues 1 to 81 (MGSVRTNRYS…IFTTCVDIRW (81 aa)) are Cytoplasmic-facing. S-nitrosocysteine is present on Cys-76. A helical membrane pass occupies residues 82 to 106 (RWMLVIFCLAFVLSWLFFGCVFWLI). The Extracellular portion of the chain corresponds to 107-128 (ALLHGDLDASKESKACVSEVNS). Positions 129-140 (FTAAFLFSIETQ) form an intramembrane region, helical; Pore-forming. An intramembrane region (pore-forming) is located at residues 141 to 147 (TTIGYGF). A Selectivity filter motif is present at residues 142 to 147 (TIGYGF). Residues 148–156 (RCVTDECPV) are Extracellular-facing. A helical transmembrane segment spans residues 157–178 (AVFMVVFQSIVGCIIDAFIIGA). At 179–427 (VMAKMAKPKK…PRPLRRESEI (249 aa)) the chain is on the cytoplasmic side. The segment at 181–208 (AKMAKPKKRNETLVFSHNAVIAMRDGKL) is polyphosphoinositide (PIP2)-binding. The interval 384–427 (SKEEDDSENGVPESTSTDTPPDLDLHNQASVPLEPRPLRRESEI) is disordered. A PDZ-binding motif is present at residues 425-427 (SEI).

This sequence belongs to the inward rectifier-type potassium channel (TC 1.A.2.1) family. KCNJ2 subfamily. As to quaternary structure, homotetramer. Homomultimeric and heteromultimeric association with KCNJ4/Kir2.3. Can form heteromeric channels with Kir2.6/KCNJ18. Associates, via its PDZ-recognition domain, with a complex containing LIN7A, LIN7B, LIN7C, DLG1, CASK and APBA1. Post-translationally, S-nitrosylation increases the open probability and inward rectifying currents.

It is found in the cell membrane. It localises to the sarcolemma. The protein localises to the T-tubule. The catalysed reaction is K(+)(in) = K(+)(out). Its activity is regulated as follows. Activated by phosphatidylinositol 4,5 biphosphate (PtdIns(4,5)P2). Inward rectifier potassium channels are characterized by a greater tendency to allow potassium to flow into the cell rather than out of it. Their voltage dependence is regulated by the concentration of extracellular potassium; as external potassium is raised, the voltage range of the channel opening shifts to more positive voltages. The inward rectification is mainly due to the blockage of outward current by internal magnesium. Blocked by external barium or cesium. Probably participates in establishing action potential waveform and excitability of neuronal and muscle tissues. This Canis lupus familiaris (Dog) protein is Inward rectifier potassium channel 2 (KCNJ2).